The sequence spans 277 residues: Inositol monophosphatase 1 (277 aa).

Mg(2+) is bound by residues Glu-70, Asp-90, Ile-92, and Asp-93. Substrate is bound at residue Glu-70. Position 92–95 (92–95 (IDGT)) interacts with substrate. Thr-168 is modified (phosphothreonine). Substrate contacts are provided by residues 194 to 196 (GTA), Glu-213, and Asp-220. Residue Asp-220 coordinates Mg(2+).

Belongs to the inositol monophosphatase superfamily. In terms of assembly, homodimer. Mg(2+) serves as cofactor.

It localises to the cytoplasm. It catalyses the reaction a myo-inositol phosphate + H2O = myo-inositol + phosphate. It carries out the reaction 1D-myo-inositol 1-phosphate + H2O = myo-inositol + phosphate. The catalysed reaction is 1D-myo-inositol 2-phosphate + H2O = myo-inositol + phosphate. The enzyme catalyses 1D-myo-inositol 3-phosphate + H2O = myo-inositol + phosphate. It catalyses the reaction 1D-myo-inositol 4-phosphate + H2O = myo-inositol + phosphate. It carries out the reaction 1D-myo-inositol 5-phosphate + H2O = myo-inositol + phosphate. The catalysed reaction is 1D-myo-inositol 6-phosphate + H2O = myo-inositol + phosphate. The enzyme catalyses scyllo-inositol 1-phosphate + H2O = scyllo-inositol + phosphate. It catalyses the reaction alpha-D-galactose 1-phosphate + H2O = D-galactose + phosphate. It carries out the reaction alpha-D-glucose 1-phosphate + H2O = D-glucose + phosphate. The catalysed reaction is D-glucose 6-phosphate + H2O = D-glucose + phosphate. The enzyme catalyses beta-D-fructose 1-phosphate + H2O = D-fructose + phosphate. It catalyses the reaction glycerol 2-phosphate + H2O = glycerol + phosphate. It carries out the reaction adenosine 2'-phosphate + H2O = adenosine + phosphate. The protein operates within polyol metabolism; myo-inositol biosynthesis; myo-inositol from D-glucose 6-phosphate: step 2/2. Inhibited by Li(+), Ca(2+) and Mn(2+), but also by Mg(2+) at concentrations above 3 mM. Phosphatase involved in the dephosphorylation of myo-inositol monophosphate to generate myo-inositol. Is also able to dephosphorylate scyllo-inositol-phosphate, myo-inositol 1,4-diphosphate, scyllo-inositol-1,3-diphosphate and scyllo-inositol-1,4-diphosphate. Also dephosphorylates in vitro other sugar-phosphates including D-galactose-1-phosphate, glucose-1-phosphate, glucose-6-phosphate, fructose-1-phosphate, beta-glycerophosphate and 2'-AMP. Responsible for the provision of inositol required for synthesis of phosphatidylinositol and polyphosphoinositides, and involved in maintaining normal brain function. Has been implicated as the pharmacological target for lithium Li(+) action in brain. In Pongo abelii (Sumatran orangutan), this protein is Inositol monophosphatase 1 (IMPA1).